A 293-amino-acid chain; its full sequence is Mimecan (293 aa).

The first 19 residues, Met1–Pro19, serve as a signal peptide directing secretion. Asn60 carries N-linked (GlcNAc...) asparagine glycosylation. LRR repeat units follow at residues Glu107–Ile126, Lys127–Ile150, Glu151–Leu174, Val175–Ile194, Lys195–Leu220, Glu221–Ile241, and Thr242–Ile272. 2 N-linked (GlcNAc...) asparagine glycosylation sites follow: Asn240 and Asn253. Cysteines 250 and 283 form a disulfide.

The protein belongs to the small leucine-rich proteoglycan (SLRP) family. SLRP class III subfamily. In terms of processing, contains keratan sulfate. Expressed in many tissues.

It is found in the secreted. It localises to the extracellular space. The protein resides in the extracellular matrix. Induces bone formation in conjunction with TGF-beta-1 or TGF-beta-2. This chain is Mimecan (OGN), found in Coturnix japonica (Japanese quail).